Consider the following 331-residue polypeptide: ADP-L-glycero-D-manno-heptose-6-epimerase (331 aa).

Residues 11-12 (FI), 32-33 (DN), Lys-39, Lys-54, 75-79 (LGACT), and Asn-92 each bind NADP(+). Tyr-139 functions as the Proton acceptor in the catalytic mechanism. Lys-143 is an NADP(+) binding site. Asn-168 is a binding site for substrate. NADP(+)-binding residues include Val-169 and Lys-177. The Proton acceptor role is filled by Lys-177. Substrate is bound by residues Arg-179, Gln-186, 200 to 203 (FGEH), His-213, and Tyr-292.

It belongs to the NAD(P)-dependent epimerase/dehydratase family. HldD subfamily. As to quaternary structure, homopentamer. It depends on NADP(+) as a cofactor.

The catalysed reaction is ADP-D-glycero-beta-D-manno-heptose = ADP-L-glycero-beta-D-manno-heptose. It participates in nucleotide-sugar biosynthesis; ADP-L-glycero-beta-D-manno-heptose biosynthesis; ADP-L-glycero-beta-D-manno-heptose from D-glycero-beta-D-manno-heptose 7-phosphate: step 4/4. In terms of biological role, catalyzes the interconversion between ADP-D-glycero-beta-D-manno-heptose and ADP-L-glycero-beta-D-manno-heptose via an epimerization at carbon 6 of the heptose. The protein is ADP-L-glycero-D-manno-heptose-6-epimerase of Cupriavidus pinatubonensis (strain JMP 134 / LMG 1197) (Cupriavidus necator (strain JMP 134)).